Consider the following 447-residue polypeptide: Ribulose bisphosphate carboxylase large chain (447 aa).

N89 and T139 together coordinate substrate. K141 acts as the Proton acceptor in catalysis. K143 contributes to the substrate binding site. The Mg(2+) site is built by K167, D169, and E170. At K167 the chain carries N6-carboxylysine. H260 serves as the catalytic Proton acceptor. Substrate contacts are provided by R261, H293, and S345.

The protein belongs to the RuBisCO large chain family. Type I subfamily. Heterohexadecamer of 8 large chains and 8 small chains; disulfide-linked. The disulfide link is formed within the large subunit homodimers. Mg(2+) is required as a cofactor. The disulfide bond which can form in the large chain dimeric partners within the hexadecamer appears to be associated with oxidative stress and protein turnover.

Its subcellular location is the plastid. It is found in the chloroplast. It catalyses the reaction 2 (2R)-3-phosphoglycerate + 2 H(+) = D-ribulose 1,5-bisphosphate + CO2 + H2O. The catalysed reaction is D-ribulose 1,5-bisphosphate + O2 = 2-phosphoglycolate + (2R)-3-phosphoglycerate + 2 H(+). Its function is as follows. RuBisCO catalyzes two reactions: the carboxylation of D-ribulose 1,5-bisphosphate, the primary event in carbon dioxide fixation, as well as the oxidative fragmentation of the pentose substrate in the photorespiration process. Both reactions occur simultaneously and in competition at the same active site. In Convolvulus tricolor (Dwarf morning glory), this protein is Ribulose bisphosphate carboxylase large chain.